The following is a 264-amino-acid chain: Thymidylate synthase (264 aa).

R21 is a dUMP binding site. H51 contributes to the (6R)-5,10-methylene-5,6,7,8-tetrahydrofolate binding site. R126 to R127 contacts dUMP. The active-site Nucleophile is C146. Residues R166 to D169, N177, and H207 to Y209 each bind dUMP. D169 is a (6R)-5,10-methylene-5,6,7,8-tetrahydrofolate binding site. A263 contacts (6R)-5,10-methylene-5,6,7,8-tetrahydrofolate.

This sequence belongs to the thymidylate synthase family. Bacterial-type ThyA subfamily. As to quaternary structure, homodimer.

The protein resides in the cytoplasm. It carries out the reaction dUMP + (6R)-5,10-methylene-5,6,7,8-tetrahydrofolate = 7,8-dihydrofolate + dTMP. The protein operates within pyrimidine metabolism; dTTP biosynthesis. Catalyzes the reductive methylation of 2'-deoxyuridine-5'-monophosphate (dUMP) to 2'-deoxythymidine-5'-monophosphate (dTMP) while utilizing 5,10-methylenetetrahydrofolate (mTHF) as the methyl donor and reductant in the reaction, yielding dihydrofolate (DHF) as a by-product. This enzymatic reaction provides an intracellular de novo source of dTMP, an essential precursor for DNA biosynthesis. In Escherichia coli (strain 55989 / EAEC), this protein is Thymidylate synthase.